Reading from the N-terminus, the 114-residue chain is UPF0339 protein plu2779 (114 aa).

2 consecutive repeat copies span residues 11–59 (TKNK…NFEI) and 62–110 (NKSG…VRDL).

It belongs to the UPF0339 family. Duplicated subfamily.

The sequence is that of UPF0339 protein plu2779 from Photorhabdus laumondii subsp. laumondii (strain DSM 15139 / CIP 105565 / TT01) (Photorhabdus luminescens subsp. laumondii).